We begin with the raw amino-acid sequence, 100 residues long: Small ribosomal subunit protein uS17 (100 aa).

Belongs to the universal ribosomal protein uS17 family. In terms of assembly, part of the 30S ribosomal subunit.

Functionally, one of the primary rRNA binding proteins, it binds specifically to the 5'-end of 16S ribosomal RNA. The chain is Small ribosomal subunit protein uS17 from Fervidobacterium nodosum (strain ATCC 35602 / DSM 5306 / Rt17-B1).